Consider the following 164-residue polypeptide: Phosphopantetheine adenylyltransferase (164 aa).

Ser9 serves as a coordination point for substrate. ATP-binding positions include 9 to 10 and His17; that span reads SF. The substrate site is built by Lys41, Val78, and Arg92. ATP is bound by residues 93 to 95, Glu103, and 128 to 134; these read GLR and VRTITAT.

The protein belongs to the bacterial CoaD family. As to quaternary structure, homohexamer. It depends on Mg(2+) as a cofactor.

It is found in the cytoplasm. The catalysed reaction is (R)-4'-phosphopantetheine + ATP + H(+) = 3'-dephospho-CoA + diphosphate. It functions in the pathway cofactor biosynthesis; coenzyme A biosynthesis; CoA from (R)-pantothenate: step 4/5. Functionally, reversibly transfers an adenylyl group from ATP to 4'-phosphopantetheine, yielding dephospho-CoA (dPCoA) and pyrophosphate. This Brucella abortus (strain 2308) protein is Phosphopantetheine adenylyltransferase.